A 156-amino-acid chain; its full sequence is Small ribosomal subunit protein uS7 (156 aa).

This sequence belongs to the universal ribosomal protein uS7 family. As to quaternary structure, part of the 30S ribosomal subunit. Contacts proteins S9 and S11.

Its function is as follows. One of the primary rRNA binding proteins, it binds directly to 16S rRNA where it nucleates assembly of the head domain of the 30S subunit. Is located at the subunit interface close to the decoding center, probably blocks exit of the E-site tRNA. This Synechococcus elongatus (strain ATCC 33912 / PCC 7942 / FACHB-805) (Anacystis nidulans R2) protein is Small ribosomal subunit protein uS7.